A 284-amino-acid chain; its full sequence is Cysteine-rich repeat secretory protein 8 (284 aa).

Positions 1 to 27 are cleaved as a signal peptide; sequence MATFIRFTAPLFCFFFLFSLFSHQTMS. 2 consecutive Gnk2-homologous domains span residues 32–136 and 151–259; these read MATF…NVSF and SLAT…TTGL.

This sequence belongs to the cysteine-rich repeat secretory protein family.

The protein localises to the secreted. The protein is Cysteine-rich repeat secretory protein 8 (CRRSP8) of Arabidopsis thaliana (Mouse-ear cress).